A 173-amino-acid polypeptide reads, in one-letter code: Translation initiation factor IF-3 (173 aa).

The protein belongs to the IF-3 family. As to quaternary structure, monomer.

The protein resides in the cytoplasm. Functionally, IF-3 binds to the 30S ribosomal subunit and shifts the equilibrium between 70S ribosomes and their 50S and 30S subunits in favor of the free subunits, thus enhancing the availability of 30S subunits on which protein synthesis initiation begins. The chain is Translation initiation factor IF-3 from Parvibaculum lavamentivorans (strain DS-1 / DSM 13023 / NCIMB 13966).